Here is a 317-residue protein sequence, read N- to C-terminus: Ribosomal RNA large subunit methyltransferase F (317 aa).

Belongs to the methyltransferase superfamily. METTL16/RlmF family.

The protein resides in the cytoplasm. It carries out the reaction adenosine(1618) in 23S rRNA + S-adenosyl-L-methionine = N(6)-methyladenosine(1618) in 23S rRNA + S-adenosyl-L-homocysteine + H(+). Functionally, specifically methylates the adenine in position 1618 of 23S rRNA. In Pseudomonas putida (strain ATCC 47054 / DSM 6125 / CFBP 8728 / NCIMB 11950 / KT2440), this protein is Ribosomal RNA large subunit methyltransferase F.